The following is a 397-amino-acid chain: MQKKTLSDVAIQGKRVLMRVDFNVPIDEEKNITDDKRIVEALPSIKKIIDGGGRLILMSHLGRPKGKVNAEFSLAPVAHRLSELLDTPVAMAKDCIGTEVMQAALALQDGEVMLLENLRFHAEEEANNPDFAKELASLGEIFVNDAFGTAHRAHASTEGITHYVPVAVAGYLIEKELNYLGKALDNPERPFVAILGGSKISGKIDVLENLFTKVDTVLIGGAMVFTFFKAQGLNVGNSLVEDNKLDLAQALLKQAADKGINLLLPDDVLVAATISSDASSHVEAVNSMSDGMIGVDIGPKTIEKYRNEILAARTVLWNGPMGVFEIDNFAEGTFAIAKALAEATSSGAITIVGGGDSAAAIAKAALSDSITHISTGGGASLEFLEGKALPGIEALND.

Substrate contacts are provided by residues 21–23 (DFN), Arg37, 60–63 (HLGR), Arg119, and Arg152. ATP-binding positions include Lys203, Gly294, Glu325, and 354-357 (GGDS).

This sequence belongs to the phosphoglycerate kinase family. As to quaternary structure, monomer.

It localises to the cytoplasm. It catalyses the reaction (2R)-3-phosphoglycerate + ATP = (2R)-3-phospho-glyceroyl phosphate + ADP. It functions in the pathway carbohydrate degradation; glycolysis; pyruvate from D-glyceraldehyde 3-phosphate: step 2/5. The polypeptide is Phosphoglycerate kinase (Chlorobium phaeobacteroides (strain DSM 266 / SMG 266 / 2430)).